The chain runs to 476 residues: Glycogen synthase (476 aa).

Lys15 provides a ligand contact to ADP-alpha-D-glucose.

The protein belongs to the glycosyltransferase 1 family. Bacterial/plant glycogen synthase subfamily.

It carries out the reaction [(1-&gt;4)-alpha-D-glucosyl](n) + ADP-alpha-D-glucose = [(1-&gt;4)-alpha-D-glucosyl](n+1) + ADP + H(+). It functions in the pathway glycan biosynthesis; glycogen biosynthesis. Synthesizes alpha-1,4-glucan chains using ADP-glucose. This is Glycogen synthase from Yersinia pestis bv. Antiqua (strain Antiqua).